We begin with the raw amino-acid sequence, 1046 residues long: Inner tegument protein (1046 aa).

The segment at 543 to 1046 is interaction with large tegument protein; sequence WGIVPPDESN…TGRRANGDNA (504 aa).

The protein belongs to the herpesviridae inner tegument protein family. As to quaternary structure, interacts (via C-terminus) with the large tegument protein/LTP (via N-terminus).

Its subcellular location is the virion tegument. The protein localises to the host cytoplasm. It localises to the host nucleus. It is found in the host Golgi apparatus. The protein resides in the host trans-Golgi network. Plays an essential role in cytoplasmic secondary envelopment during viral egress. Interacts with the capsid via the large tegument protein/LTP and participates in its transport to the host trans-Golgi network (TGN) where secondary envelopment occurs. Modulates tegumentation and capsid accumulation at the viral assembly complex. In Gallid herpesvirus 2 (strain Chicken/Md5/ATCC VR-987) (GaHV-2), this protein is Inner tegument protein (MDV050).